The following is a 148-amino-acid chain: Azurin (148 aa).

A signal peptide spans 1–20 (MLRKLAAVSLLSLLSAPLLA). The 128-residue stretch at 21–148 (AECSVDIQGN…ALMKGTLTLK (128 aa)) folds into the Plastocyanin-like domain. Cysteine 23 and cysteine 46 are joined by a disulfide. Positions 66, 132, 137, and 141 each coordinate Cu cation.

Its subcellular location is the periplasm. In terms of biological role, transfers electrons from cytochrome c551 to cytochrome oxidase. The protein is Azurin (azu) of Pseudomonas aeruginosa (strain ATCC 15692 / DSM 22644 / CIP 104116 / JCM 14847 / LMG 12228 / 1C / PRS 101 / PAO1).